The sequence spans 118 residues: MARIAGVNLPAQKHVWVGLQSIYGIGRTRSKKLCESAGVTSTTKIRDLSEPEIERLRAEVGKYVVEGDLRREIGIAIKRLMDLGCYRGLRHRRGLPLRGQRTRTNARTRKGPRKAIRK.

The tract at residues Gly-94–Lys-118 is disordered.

This sequence belongs to the universal ribosomal protein uS13 family. As to quaternary structure, part of the 30S ribosomal subunit. Forms a loose heterodimer with protein S19. Forms two bridges to the 50S subunit in the 70S ribosome.

Located at the top of the head of the 30S subunit, it contacts several helices of the 16S rRNA. In the 70S ribosome it contacts the 23S rRNA (bridge B1a) and protein L5 of the 50S subunit (bridge B1b), connecting the 2 subunits; these bridges are implicated in subunit movement. Contacts the tRNAs in the A and P-sites. This chain is Small ribosomal subunit protein uS13, found in Xanthomonas axonopodis pv. citri (strain 306).